Consider the following 75-residue polypeptide: CDC42 small effector protein 1 (75 aa).

Residues Cys-10 and Cys-11 are each lipidated (S-palmitoyl cysteine). Residues 30–43 form the CRIB domain; sequence IGEPTNFVHLTHIG. Residues 45–75 are disordered; it reads GEMADGMQPSGPIKEQMRSKVPHANGRNSLL.

Belongs to the CDC42SE/SPEC family.

Its subcellular location is the cytoplasm. It localises to the cytoskeleton. The protein resides in the cell membrane. Functionally, probably involved in the organization of the actin cytoskeleton by acting downstream of CDC42, inducing actin filament assembly. The chain is CDC42 small effector protein 1 (cdc42se1) from Danio rerio (Zebrafish).